The primary structure comprises 84 residues: Small ribosomal subunit protein eS27-like (84 aa).

Residues 1-16 (MPLARDLLHPSLEEEK) show a composition bias toward basic and acidic residues. A disordered region spans residues 1 to 23 (MPLARDLLHPSLEEEKKKHKKKR). The segment at 38–60 (PGCYKITTVFSHAQTVVLCVGCS) adopts a C4-type zinc-finger fold.

The protein belongs to the eukaryotic ribosomal protein eS27 family. Zn(2+) is required as a cofactor.

This Mus musculus (Mouse) protein is Small ribosomal subunit protein eS27-like.